The following is a 527-amino-acid chain: Peptide chain release factor 3 (527 aa).

The tr-type G domain maps to 9–277 (AKRRTFAIIS…CIVDWAPQPL (269 aa)). GTP is bound by residues 18–25 (SHPDAGKT), 86–90 (DTPGH), and 140–143 (NKLD).

It belongs to the TRAFAC class translation factor GTPase superfamily. Classic translation factor GTPase family. PrfC subfamily.

The protein localises to the cytoplasm. In terms of biological role, increases the formation of ribosomal termination complexes and stimulates activities of RF-1 and RF-2. It binds guanine nucleotides and has strong preference for UGA stop codons. It may interact directly with the ribosome. The stimulation of RF-1 and RF-2 is significantly reduced by GTP and GDP, but not by GMP. This Pseudomonas paraeruginosa (strain DSM 24068 / PA7) (Pseudomonas aeruginosa (strain PA7)) protein is Peptide chain release factor 3.